A 289-amino-acid chain; its full sequence is Shikimate dehydrogenase (NADP(+)) (289 aa).

Residues 22–24 and threonine 69 contribute to the shikimate site; that span reads SRS. Lysine 73 acts as the Proton acceptor in catalysis. Glutamate 85 is an NADP(+) binding site. 2 residues coordinate shikimate: asparagine 94 and aspartate 109. Residues 134–138, 158–163, and isoleucine 226 contribute to the NADP(+) site; these read GAGGA and NRTLSR. Tyrosine 228 is a binding site for shikimate. Glycine 249 contributes to the NADP(+) binding site.

Belongs to the shikimate dehydrogenase family. As to quaternary structure, homodimer.

It carries out the reaction shikimate + NADP(+) = 3-dehydroshikimate + NADPH + H(+). It participates in metabolic intermediate biosynthesis; chorismate biosynthesis; chorismate from D-erythrose 4-phosphate and phosphoenolpyruvate: step 4/7. Involved in the biosynthesis of the chorismate, which leads to the biosynthesis of aromatic amino acids. Catalyzes the reversible NADPH linked reduction of 3-dehydroshikimate (DHSA) to yield shikimate (SA). This is Shikimate dehydrogenase (NADP(+)) from Brucella ovis (strain ATCC 25840 / 63/290 / NCTC 10512).